The sequence spans 286 residues: Phosphate import ATP-binding protein PstB (286 aa).

A disordered region spans residues 1-27; it reads MEPKETLRQRWPGRGRTEETGAMKKSD. Over residues 15–27 the composition is skewed to basic and acidic residues; that stretch reads GRTEETGAMKKSD. The ABC transporter domain maps to 33-281; that stretch reads MTVEHLNMYY…PDRKETEDYV (249 aa). 65–72 contributes to the ATP binding site; sequence GPSGCGKS.

The protein belongs to the ABC transporter superfamily. Phosphate importer (TC 3.A.1.7) family. As to quaternary structure, the complex is composed of two ATP-binding proteins (PstB), two transmembrane proteins (PstC and PstA) and a solute-binding protein (PstS).

Its subcellular location is the cell membrane. It catalyses the reaction phosphate(out) + ATP + H2O = ADP + 2 phosphate(in) + H(+). In terms of biological role, part of the ABC transporter complex PstSACB involved in phosphate import. Responsible for energy coupling to the transport system. The chain is Phosphate import ATP-binding protein PstB from Rubrobacter xylanophilus (strain DSM 9941 / JCM 11954 / NBRC 16129 / PRD-1).